The primary structure comprises 359 residues: Guanine nucleotide-binding protein subunit alpha-11 (359 aa).

2 S-palmitoyl cysteine lipidation sites follow: Cys9 and Cys10. The region spanning Arg38–Val359 is the G-alpha domain. Residues Lys41–Thr54 form a G1 motif region. Residues Gly46–Ser53 and Leu180–Arg183 contribute to the GTP site. Ser53 is a binding site for Mg(2+). A G2 motif region spans residues Asp178 to Thr186. Residue Thr186 coordinates Mg(2+). Positions Phe201–Arg210 are G3 motif. The segment at Ile270 to Asp277 is G4 motif. GTP is bound by residues Asn274–Asp277 and Ala331. The segment at Thr329–Thr334 is G5 motif.

This sequence belongs to the G-alpha family. G(q) subfamily. G proteins are composed of 3 units; alpha, beta and gamma. The alpha chain contains the guanine nucleotide binding site. Interacts with RGS22. Interacts with NTSR1.

The protein localises to the cell membrane. It localises to the cytoplasm. It carries out the reaction GTP + H2O = GDP + phosphate + H(+). Guanine nucleotide-binding proteins (G proteins) function as transducers downstream of G protein-coupled receptors (GPCRs) in numerous signaling cascades. The alpha chain contains the guanine nucleotide binding site and alternates between an active, GTP-bound state and an inactive, GDP-bound state. Signaling by an activated GPCR promotes GDP release and GTP binding. The alpha subunit has a low GTPase activity that converts bound GTP to GDP, thereby terminating the signal. Both GDP release and GTP hydrolysis are modulated by numerous regulatory proteins. Signaling is mediated via phospholipase C-beta-dependent inositol lipid hydrolysis for signal propagation: activates phospholipase C-beta: following GPCR activation, GNA11 activates PLC-beta (PLCB1, PLCB2, PLCB3 or PLCB4), leading to production of diacylglycerol (DAG) and inositol 1,4,5-trisphosphate (IP3). Transduces FFAR4 signaling in response to long-chain fatty acids (LCFAs). Together with GNAQ, required for heart development. In the respiratory epithelium, transmits OXGR1-dependent signals that lead to downstream intracellular Ca(2+) release and mucocilliary clearance of airborne pathogens. This Rattus norvegicus (Rat) protein is Guanine nucleotide-binding protein subunit alpha-11 (Gna11).